Consider the following 507-residue polypeptide: ATP synthase subunit alpha, chloroplastic (507 aa).

Residue 170-177 (GDRQTGKT) participates in ATP binding. The residue at position 257 (Thr257) is a Phosphothreonine.

This sequence belongs to the ATPase alpha/beta chains family. As to quaternary structure, F-type ATPases have 2 components, CF(1) - the catalytic core - and CF(0) - the membrane proton channel. CF(1) has five subunits: alpha(3), beta(3), gamma(1), delta(1), epsilon(1). CF(0) has four main subunits: a, b, b' and c.

Its subcellular location is the plastid. It localises to the chloroplast thylakoid membrane. The catalysed reaction is ATP + H2O + 4 H(+)(in) = ADP + phosphate + 5 H(+)(out). In terms of biological role, produces ATP from ADP in the presence of a proton gradient across the membrane. The alpha chain is a regulatory subunit. This chain is ATP synthase subunit alpha, chloroplastic, found in Aethionema cordifolium (Lebanon stonecress).